The chain runs to 130 residues: Iron-sulfur cluster insertion protein ErpA (130 aa).

The iron-sulfur cluster site is built by Cys46, Cys116, and Cys118.

This sequence belongs to the HesB/IscA family. In terms of assembly, homodimer. Iron-sulfur cluster serves as cofactor.

Functionally, required for insertion of 4Fe-4S clusters for at least IspG. The chain is Iron-sulfur cluster insertion protein ErpA from Legionella pneumophila subsp. pneumophila (strain Philadelphia 1 / ATCC 33152 / DSM 7513).